The chain runs to 161 residues: Transcriptional repressor NrdR (161 aa).

A zinc finger spans residues 3-34 (CPYCGARDARVIDSRELNGGESIRRRRECIAC). The ATP-cone domain occupies 49–139 (LMVVKRDGRR…VYRRFADLED (91 aa)).

The protein belongs to the NrdR family. Requires Zn(2+) as cofactor.

In terms of biological role, negatively regulates transcription of bacterial ribonucleotide reductase nrd genes and operons by binding to NrdR-boxes. This is Transcriptional repressor NrdR from Thermomicrobium roseum (strain ATCC 27502 / DSM 5159 / P-2).